The sequence spans 662 residues: p-hydroxybenzoic acid efflux pump subunit AaeB (662 aa).

A run of 11 helical transmembrane segments spans residues 22–42, 52–72, 78–98, 102–122, 129–149, 161–181, 378–398, 415–435, 439–459, 467–487, and 491–511; these read FAFKLTFAVVLSLFLGFHLQL, AAIVAGGPAFVAGGEPFSGAI, LRIVGTFIGCIGALAIIISTI, IVMMLLCCIWAGLCNWISSLV, IFGLAGYTTLIIILATQGTPM, EIVLGIACVIFADLLFAPRSI, LFWLSTGWSSGGICMMMIAVV, FLYGTIYSLPLGALMFMFILP, QSILLLCLSLGAMTFFLGVEV, LGALISTINVLLLNNPMTFNI, and LDNAIGQIIGCFVALMVILLI.

This sequence belongs to the aromatic acid exporter ArAE (TC 2.A.85) family.

The protein localises to the cell inner membrane. Functionally, forms an efflux pump with AaeA. Could function as a metabolic relief valve, allowing to eliminate certain compounds when they accumulate to high levels in the cell. The polypeptide is p-hydroxybenzoic acid efflux pump subunit AaeB (Pectobacterium parmentieri (strain WPP163) (Pectobacterium wasabiae (strain WPP163))).